We begin with the raw amino-acid sequence, 87 residues long: U3-theraphotoxin-Hhn1a 12 (87 aa).

Residues 1–24 (MVNMKASMFLTFAGLVLLFVVCYA) form the signal peptide. A propeptide spanning residues 25–52 (SESEEKEFPKEMLSSIFAVDKDFKQEER) is cleaved from the precursor. 3 disulfides stabilise this stretch: cysteine 54-cysteine 67, cysteine 61-cysteine 72, and cysteine 66-cysteine 79.

The protein belongs to the neurotoxin 10 (Hwtx-1) family. 51 (Hntx-8) subfamily. Hntx-8 sub-subfamily. In terms of tissue distribution, expressed by the venom gland.

The protein localises to the secreted. Ion channel inhibitor. This is U3-theraphotoxin-Hhn1a 12 from Cyriopagopus hainanus (Chinese bird spider).